The following is a 141-amino-acid chain: Large ribosomal subunit protein uL11 (141 aa).

This sequence belongs to the universal ribosomal protein uL11 family. Part of the ribosomal stalk of the 50S ribosomal subunit. Interacts with L10 and the large rRNA to form the base of the stalk. L10 forms an elongated spine to which L12 dimers bind in a sequential fashion forming a multimeric L10(L12)X complex. One or more lysine residues are methylated.

Functionally, forms part of the ribosomal stalk which helps the ribosome interact with GTP-bound translation factors. The sequence is that of Large ribosomal subunit protein uL11 from Synechococcus elongatus (strain ATCC 33912 / PCC 7942 / FACHB-805) (Anacystis nidulans R2).